The following is a 267-amino-acid chain: Tryptophan 2,3-dioxygenase (267 aa).

Substrate contacts are provided by residues 44–48 and Arg-114; that span reads FITIH. Position 225 (His-225) interacts with heme. Thr-239 is a binding site for substrate.

Belongs to the tryptophan 2,3-dioxygenase family. Homotetramer. The cofactor is heme.

The catalysed reaction is L-tryptophan + O2 = N-formyl-L-kynurenine. It participates in amino-acid degradation; L-tryptophan degradation via kynurenine pathway; L-kynurenine from L-tryptophan: step 1/2. Functionally, heme-dependent dioxygenase that catalyzes the oxidative cleavage of the L-tryptophan (L-Trp) pyrrole ring and converts L-tryptophan to N-formyl-L-kynurenine. Catalyzes the oxidative cleavage of the indole moiety. In Nocardioides sp. (strain ATCC BAA-499 / JS614), this protein is Tryptophan 2,3-dioxygenase.